The sequence spans 81 residues: Sulfur carrier protein TusA (81 aa).

The active-site Cysteine persulfide intermediate is cysteine 19.

It belongs to the sulfur carrier protein TusA family.

It is found in the cytoplasm. Functionally, sulfur carrier protein which probably makes part of a sulfur-relay system. In Shewanella denitrificans (strain OS217 / ATCC BAA-1090 / DSM 15013), this protein is Sulfur carrier protein TusA.